Consider the following 502-residue polypeptide: ATP synthase subunit alpha (502 aa).

169 to 176 (GDRQTGKT) is a binding site for ATP.

It belongs to the ATPase alpha/beta chains family. F-type ATPases have 2 components, CF(1) - the catalytic core - and CF(0) - the membrane proton channel. CF(1) has five subunits: alpha(3), beta(3), gamma(1), delta(1), epsilon(1). CF(0) has three main subunits: a(1), b(2) and c(9-12). The alpha and beta chains form an alternating ring which encloses part of the gamma chain. CF(1) is attached to CF(0) by a central stalk formed by the gamma and epsilon chains, while a peripheral stalk is formed by the delta and b chains.

It is found in the cell inner membrane. The enzyme catalyses ATP + H2O + 4 H(+)(in) = ADP + phosphate + 5 H(+)(out). Its function is as follows. Produces ATP from ADP in the presence of a proton gradient across the membrane. The alpha chain is a regulatory subunit. The polypeptide is ATP synthase subunit alpha (Nitratidesulfovibrio vulgaris (strain ATCC 29579 / DSM 644 / CCUG 34227 / NCIMB 8303 / VKM B-1760 / Hildenborough) (Desulfovibrio vulgaris)).